A 244-amino-acid polypeptide reads, in one-letter code: MAAESFELIAELREFTGKSAARRMRRFEDKVPGTVYGAGKAPQSITLLQKDLLKALESESTFSSILTLKVGDKKQKVILKALQRHHTKPKIVHIDFQRIKASEKLIMNVPLHFLGEDDCPGVEAGGVVSHLQSEVEIRCLPADLPEYIEVDLSHLQLDESVHLSNLKLPAGVGLTSAVDEEHDSPIASVHMPRVSKADVEAEAAEAALAKEAATEAAEEEETEKPASEAEASGEAEQADTDKKE.

The segment at 197–244 (ADVEAEAAEAALAKEAATEAAEEEETEKPASEAEASGEAEQADTDKKE) is disordered. The span at 204 to 215 (AEAALAKEAATE) shows a compositional bias: low complexity.

It belongs to the bacterial ribosomal protein bL25 family. CTC subfamily. Part of the 50S ribosomal subunit; part of the 5S rRNA/L5/L18/L25 subcomplex. Contacts the 5S rRNA. Binds to the 5S rRNA independently of L5 and L18.

Its function is as follows. This is one of the proteins that binds to the 5S RNA in the ribosome where it forms part of the central protuberance. The sequence is that of Large ribosomal subunit protein bL25 from Coxiella burnetii (strain CbuK_Q154) (Coxiella burnetii (strain Q154)).